The chain runs to 342 residues: GTPase Obg (342 aa).

In terms of domain architecture, Obg spans 1-159; the sequence is MQFIDRAEIE…RNLRLELKLL (159 aa). Positions 160-328 constitute an OBG-type G domain; the sequence is AEVGIIGLPN…LLQAIWHRLD (169 aa). Residues 166–173, 191–195, 213–216, 280–283, and 309–311 contribute to the GTP site; these read GLPNAGKS, FTTLV, DIPG, NKVD, and SAV. Mg(2+)-binding residues include S173 and T193.

It belongs to the TRAFAC class OBG-HflX-like GTPase superfamily. OBG GTPase family. As to quaternary structure, monomer. Requires Mg(2+) as cofactor.

It is found in the cytoplasm. Its function is as follows. An essential GTPase which binds GTP, GDP and possibly (p)ppGpp with moderate affinity, with high nucleotide exchange rates and a fairly low GTP hydrolysis rate. Plays a role in control of the cell cycle, stress response, ribosome biogenesis and in those bacteria that undergo differentiation, in morphogenesis control. The polypeptide is GTPase Obg (Crocosphaera subtropica (strain ATCC 51142 / BH68) (Cyanothece sp. (strain ATCC 51142))).